The sequence spans 114 residues: uncharacterized protein (114 aa).

The helical transmembrane segment at 13 to 30 (LYISAAGIASIYVVKTIV) threads the bilayer.

The protein resides in the mitochondrion outer membrane. This is an uncharacterized protein from Saccharomyces cerevisiae (strain ATCC 204508 / S288c) (Baker's yeast).